Reading from the N-terminus, the 620-residue chain is Glutathione-regulated potassium-efflux system protein KefC (620 aa).

Transmembrane regions (helical) follow at residues 4-24 (HTLL…PIAV), 26-46 (LGLG…PWGL), 54-74 (SILH…GLEL), 90-110 (GALQ…FLGL), 114-134 (VAEL…MQAM), 149-169 (FAVL…IPLL), 178-198 (LGAF…VVVL), 218-238 (VFSA…EEVG), 270-290 (GLLL…GTLV), 294-314 (LRIL…LWLV), 327-347 (WFAV…GAAQ), and 359-379 (ALTL…VLLT). Positions 399-518 (QPRVIVAGFG…AGVAMPERET (120 aa)) constitute an RCK N-terminal domain. The segment at 599–620 (QGTAEGKHSGEVADEPEVKPSI) is disordered.

It belongs to the monovalent cation:proton antiporter 2 (CPA2) transporter (TC 2.A.37) family. KefC subfamily. Homodimer. Interacts with the regulatory subunit KefF.

It is found in the cell inner membrane. Functionally, pore-forming subunit of a potassium efflux system that confers protection against electrophiles. Catalyzes K(+)/H(+) antiport. This Salmonella paratyphi B (strain ATCC BAA-1250 / SPB7) protein is Glutathione-regulated potassium-efflux system protein KefC.